Reading from the N-terminus, the 196-residue chain is Ribosome maturation factor RimP (196 aa).

Belongs to the RimP family.

It localises to the cytoplasm. In terms of biological role, required for maturation of 30S ribosomal subunits. The chain is Ribosome maturation factor RimP from Dinoroseobacter shibae (strain DSM 16493 / NCIMB 14021 / DFL 12).